Reading from the N-terminus, the 459-residue chain is MKNYTPKEIVEELDKYIVGQKEAKKSVAVALRNRYRRNLLPDDFKEEVTPKNIIMVGPTGVGKTEIARRIAKLVEAPFVKVEATKFTEVGYVGRDVDSMVRDLVEAAVRMVKEEKLKKVTEKAKKIAEDRLIDYIIGKRKKQTKNPFEVLFNYPSAEKSEETEEESMQYKREEIRQKLRNGELDNYVVEIEVTDTSTPMLEMYTNLGSEEMNINLQDIFADILPKKKKIKKVPVYEAKRILESEEAQNLIDMDEVIEEAIKRAENDGIIFIDEIDKIASSGYTAGPDVSREGVQRDILPIIEGCTVMTKYGPVKTDHILFIAAGAFNVAKVSDLIPELQGRFPVRVNLKPLTKEDFIRILKEPKNALTKQYQELLRTEGIEVKYTDEAIEAIAEVAYLINQQSEDIGARRLHTVMEKLFEELSFNAPELGGQQIVITEEYVKEQLKDSLNKYEVSKYIL.

ATP contacts are provided by residues Val-18, 60–65, Asp-272, Glu-337, and Arg-409; that span reads GVGKTE.

This sequence belongs to the ClpX chaperone family. HslU subfamily. A double ring-shaped homohexamer of HslV is capped on each side by a ring-shaped HslU homohexamer. The assembly of the HslU/HslV complex is dependent on binding of ATP.

The protein resides in the cytoplasm. Its function is as follows. ATPase subunit of a proteasome-like degradation complex; this subunit has chaperone activity. The binding of ATP and its subsequent hydrolysis by HslU are essential for unfolding of protein substrates subsequently hydrolyzed by HslV. HslU recognizes the N-terminal part of its protein substrates and unfolds these before they are guided to HslV for hydrolysis. This is ATP-dependent protease ATPase subunit HslU from Thermoanaerobacter pseudethanolicus (strain ATCC 33223 / 39E) (Clostridium thermohydrosulfuricum).